The following is a 184-amino-acid chain: Photosystem I assembly protein Ycf4 (184 aa).

A run of 2 helical transmembrane segments spans residues 20–42 (VNLCWACILVCGATGFLLVGFSS) and 57–79 (IAFIPQGLVMCFYGIAGLFLGLY).

Belongs to the Ycf4 family.

The protein resides in the plastid. The protein localises to the chloroplast thylakoid membrane. In terms of biological role, seems to be required for the assembly of the photosystem I complex. The chain is Photosystem I assembly protein Ycf4 from Adiantum capillus-veneris (Maidenhair fern).